The sequence spans 62 residues: MMELIPQPRTKFLRVQCPECNNEQIVFGSPATVVKCLTCGKVLVEPRGGKGKVKAKILEILG.

Zn(2+) contacts are provided by cysteine 17, cysteine 20, cysteine 36, and cysteine 39. Residues 17 to 39 form a C4-type zinc finger; it reads CPECNNEQIVFGSPATVVKCLTC.

This sequence belongs to the eukaryotic ribosomal protein eS27 family. Part of the 30S ribosomal subunit. It depends on Zn(2+) as a cofactor.

This Methanocaldococcus jannaschii (strain ATCC 43067 / DSM 2661 / JAL-1 / JCM 10045 / NBRC 100440) (Methanococcus jannaschii) protein is Small ribosomal subunit protein eS27.